We begin with the raw amino-acid sequence, 123 residues long: Small ribosomal subunit protein uS12 (123 aa).

D89 carries the 3-methylthioaspartic acid modification. A disordered region spans residues 101-123 (TLDTSGVSDRRQSRSKYGAKRPK). Over residues 113 to 123 (SRSKYGAKRPK) the composition is skewed to basic residues.

Belongs to the universal ribosomal protein uS12 family. As to quaternary structure, part of the 30S ribosomal subunit. Contacts proteins S8 and S17. May interact with IF1 in the 30S initiation complex.

In terms of biological role, with S4 and S5 plays an important role in translational accuracy. Its function is as follows. Interacts with and stabilizes bases of the 16S rRNA that are involved in tRNA selection in the A site and with the mRNA backbone. Located at the interface of the 30S and 50S subunits, it traverses the body of the 30S subunit contacting proteins on the other side and probably holding the rRNA structure together. The combined cluster of proteins S8, S12 and S17 appears to hold together the shoulder and platform of the 30S subunit. In Solidesulfovibrio magneticus (strain ATCC 700980 / DSM 13731 / RS-1) (Desulfovibrio magneticus), this protein is Small ribosomal subunit protein uS12.